Here is a 40-residue protein sequence, read N- to C-terminus: Photosystem II reaction center protein J (40 aa).

Residues 8–28 traverse the membrane as a helical segment; the sequence is IPLWLIGTVAGIAVIGLVGVF.

It belongs to the PsbJ family. As to quaternary structure, PSII is composed of 1 copy each of membrane proteins PsbA, PsbB, PsbC, PsbD, PsbE, PsbF, PsbH, PsbI, PsbJ, PsbK, PsbL, PsbM, PsbT, PsbX, PsbY, PsbZ, Psb30/Ycf12, at least 3 peripheral proteins of the oxygen-evolving complex and a large number of cofactors. It forms dimeric complexes.

The protein resides in the plastid. Its subcellular location is the chloroplast thylakoid membrane. Its function is as follows. One of the components of the core complex of photosystem II (PSII). PSII is a light-driven water:plastoquinone oxidoreductase that uses light energy to abstract electrons from H(2)O, generating O(2) and a proton gradient subsequently used for ATP formation. It consists of a core antenna complex that captures photons, and an electron transfer chain that converts photonic excitation into a charge separation. This is Photosystem II reaction center protein J from Secale cereale (Rye).